The chain runs to 590 residues: Aspartate--tRNA(Asp/Asn) ligase (590 aa).

Residue Glu178 coordinates L-aspartate. The interval Gln202 to Lys205 is aspartate. Arg224 is a binding site for L-aspartate. ATP contacts are provided by residues Arg224–Glu226 and Gln233. His453 contributes to the L-aspartate binding site. Glu487 is an ATP binding site. Position 494 (Arg494) interacts with L-aspartate. Gly539–Arg542 contacts ATP.

It belongs to the class-II aminoacyl-tRNA synthetase family. Type 1 subfamily. In terms of assembly, homodimer.

The protein localises to the cytoplasm. The enzyme catalyses tRNA(Asx) + L-aspartate + ATP = L-aspartyl-tRNA(Asx) + AMP + diphosphate. Its function is as follows. Aspartyl-tRNA synthetase with relaxed tRNA specificity since it is able to aspartylate not only its cognate tRNA(Asp) but also tRNA(Asn). Reaction proceeds in two steps: L-aspartate is first activated by ATP to form Asp-AMP and then transferred to the acceptor end of tRNA(Asp/Asn). This is Aspartate--tRNA(Asp/Asn) ligase from Treponema denticola (strain ATCC 35405 / DSM 14222 / CIP 103919 / JCM 8153 / KCTC 15104).